The following is a 476-amino-acid chain: Lactate utilization protein B (476 aa).

2 4Fe-4S ferredoxin-type domains span residues 304 to 334 and 353 to 382; these read GTEF…GHSY and YDDY…LHEL. [4Fe-4S] cluster contacts are provided by C313, C316, C319, C323, C366, C369, and C373.

It belongs to the LutB/YkgF family.

Its function is as follows. Is involved in L-lactate degradation and allows cells to grow with lactate as the sole carbon source. Has probably a role as an electron transporter during oxidation of L-lactate. This Geobacillus thermodenitrificans (strain NG80-2) protein is Lactate utilization protein B.